We begin with the raw amino-acid sequence, 365 residues long: Probable dual-specificity RNA methyltransferase RlmN (365 aa).

E99 serves as the catalytic Proton acceptor. The Radical SAM core domain occupies 105 to 344 (QSYGLSVCVT…CVVRQEHGTD (240 aa)). An intrachain disulfide couples C112 to C349. Positions 119, 123, and 126 each coordinate [4Fe-4S] cluster. Residues 171–172 (GE), S203, 227–229 (SLH), and N305 contribute to the S-adenosyl-L-methionine site. C349 serves as the catalytic S-methylcysteine intermediate.

The protein belongs to the radical SAM superfamily. RlmN family. [4Fe-4S] cluster is required as a cofactor.

The protein resides in the cytoplasm. The catalysed reaction is adenosine(2503) in 23S rRNA + 2 reduced [2Fe-2S]-[ferredoxin] + 2 S-adenosyl-L-methionine = 2-methyladenosine(2503) in 23S rRNA + 5'-deoxyadenosine + L-methionine + 2 oxidized [2Fe-2S]-[ferredoxin] + S-adenosyl-L-homocysteine. It catalyses the reaction adenosine(37) in tRNA + 2 reduced [2Fe-2S]-[ferredoxin] + 2 S-adenosyl-L-methionine = 2-methyladenosine(37) in tRNA + 5'-deoxyadenosine + L-methionine + 2 oxidized [2Fe-2S]-[ferredoxin] + S-adenosyl-L-homocysteine. In terms of biological role, specifically methylates position 2 of adenine 2503 in 23S rRNA and position 2 of adenine 37 in tRNAs. This chain is Probable dual-specificity RNA methyltransferase RlmN, found in Lactococcus lactis subsp. cremoris (strain SK11).